Here is a 398-residue protein sequence, read N- to C-terminus: Succinate--CoA ligase [ADP-forming] subunit beta (398 aa).

Residues 9–254 (KAVLREFGVS…ETEEDAKEIE (246 aa)) enclose the ATP-grasp domain. ATP contacts are provided by residues K46, 53-55 (GRG), E109, A112, and E117. Positions 209 and 223 each coordinate Mg(2+). Substrate contacts are provided by residues N274 and 331–333 (GIM).

This sequence belongs to the succinate/malate CoA ligase beta subunit family. Heterotetramer of two alpha and two beta subunits. The cofactor is Mg(2+).

It carries out the reaction succinate + ATP + CoA = succinyl-CoA + ADP + phosphate. The enzyme catalyses GTP + succinate + CoA = succinyl-CoA + GDP + phosphate. It functions in the pathway carbohydrate metabolism; tricarboxylic acid cycle; succinate from succinyl-CoA (ligase route): step 1/1. Its function is as follows. Succinyl-CoA synthetase functions in the citric acid cycle (TCA), coupling the hydrolysis of succinyl-CoA to the synthesis of either ATP or GTP and thus represents the only step of substrate-level phosphorylation in the TCA. The beta subunit provides nucleotide specificity of the enzyme and binds the substrate succinate, while the binding sites for coenzyme A and phosphate are found in the alpha subunit. The chain is Succinate--CoA ligase [ADP-forming] subunit beta from Afipia carboxidovorans (strain ATCC 49405 / DSM 1227 / KCTC 32145 / OM5) (Oligotropha carboxidovorans).